The sequence spans 215 residues: 3,4-dihydroxy-2-butanone 4-phosphate synthase (215 aa).

D-ribulose 5-phosphate is bound by residues 37-38 (RE), aspartate 42, 150-154 (RRGHT), and glutamate 175. Glutamate 38 lines the Mg(2+) pocket. Histidine 153 is a Mg(2+) binding site.

The protein belongs to the DHBP synthase family. In terms of assembly, homodimer. It depends on Mg(2+) as a cofactor. Requires Mn(2+) as cofactor.

It carries out the reaction D-ribulose 5-phosphate = (2S)-2-hydroxy-3-oxobutyl phosphate + formate + H(+). The protein operates within cofactor biosynthesis; riboflavin biosynthesis; 2-hydroxy-3-oxobutyl phosphate from D-ribulose 5-phosphate: step 1/1. Functionally, catalyzes the conversion of D-ribulose 5-phosphate to formate and 3,4-dihydroxy-2-butanone 4-phosphate. The sequence is that of 3,4-dihydroxy-2-butanone 4-phosphate synthase from Desulfatibacillum aliphaticivorans.